We begin with the raw amino-acid sequence, 292 residues long: Histamine N-methyltransferase (292 aa).

Glutamate 28 serves as a coordination point for substrate. Positions 60, 89, 94, 120, and 142 each coordinate S-adenosyl-L-methionine. Asparagine 283 contributes to the substrate binding site.

This sequence belongs to the class I-like SAM-binding methyltransferase superfamily. HNMT family. Monomer.

The protein resides in the cytoplasm. The catalysed reaction is histamine + S-adenosyl-L-methionine = N(tau)-methylhistamine + S-adenosyl-L-homocysteine + H(+). Functionally, inactivates histamine by N-methylation. Plays an important role in degrading histamine and in regulating the airway response to histamine. The chain is Histamine N-methyltransferase (HNMT) from Homo sapiens (Human).